The chain runs to 836 residues: Granulocyte colony-stimulating factor receptor (836 aa).

The first 24 residues, 1–24, serve as a signal peptide directing secretion; the sequence is MARLGNCSLTWAALIILLLPGSLE. The Ig-like C2-type domain occupies 25–117; it reads ECGHISVSAP…SLQILDQVEL (93 aa). The Extracellular segment spans residues 25–627; it reads ECGHISVSAP…TLTPEGSELH (603 aa). 2 disulfide bridges follow: Cys-26–Cys-52 and Cys-46–Cys-101. Asn-51, Asn-93, Asn-128, and Asn-134 each carry an N-linked (GlcNAc...) asparagine glycan. Fibronectin type-III domains follow at residues 125–230, 233–332, 334–430, 431–528, and 530–623; these read IPHN…LEPP, RTMD…TTER, PTVR…SRGP, ALTR…MAPS, and APEL…TPEG. 5 disulfides stabilise this stretch: Cys-131–Cys-142, Cys-167–Cys-218, Cys-177–Cys-186, Cys-248–Cys-295, and Cys-266–Cys-309. The short motif at 318–322 is the WSXWS motif element; the sequence is WSDWS. N-linked (GlcNAc...) asparagine glycosylation is found at Asn-389, Asn-474, Asn-579, and Asn-610. The chain crosses the membrane as a helical span at residues 628–650; that stretch reads IILGLFGLLLLLTCLCGTAWLCC. The Cytoplasmic segment spans residues 651 to 836; sequence SPNRKNPLWP…VHGMEALGSF (186 aa). Positions 658-666 match the Box 1 motif motif; the sequence is LWPSVPDPA.

This sequence belongs to the type I cytokine receptor family. Type 2 subfamily. Homodimer. The dimeric receptor binds two CSF3 molecules. Interacts with CEACAM1; down-regulates the CSF3R-STAT3 pathway through recruitment of PTPN6 that dephosphorylates CSF3R. N-glycosylated. As to expression, one or several isoforms have been found in myelogenous leukemia cell line KG-1, leukemia U-937 cell line, in bone marrow cells, placenta, and peripheral blood granulocytes. Isoform GCSFR-2 is found only in leukemia U-937 cells. Isoform GCSFR-3 is highly expressed in placenta.

It is found in the secreted. Its subcellular location is the cell membrane. Its function is as follows. Receptor for granulocyte colony-stimulating factor (CSF3), essential for granulocytic maturation. Plays a crucial role in the proliferation, differentiation and survival of cells along the neutrophilic lineage. In addition it may function in some adhesion or recognition events at the cell surface. This is Granulocyte colony-stimulating factor receptor (CSF3R) from Homo sapiens (Human).